The following is a 626-amino-acid chain: Chaperone protein HtpG (626 aa).

An a; substrate-binding region spans residues 1-341 (METKQFKAES…SEDLSLNISR (341 aa)). A b region spans residues 342-552 (EILQHDRQLK…EGELSIEMEK (211 aa)). A disordered region spans residues 490–509 (DLGIEGEEKENTSSSDDKEN). Residues 498 to 509 (KENTSSSDDKEN) are compositionally biased toward basic and acidic residues. The c stretch occupies residues 553–626 (VLNAMPNNQN…FTNNICKIMK (74 aa)).

This sequence belongs to the heat shock protein 90 family. As to quaternary structure, homodimer.

Its subcellular location is the cytoplasm. Its function is as follows. Molecular chaperone. Has ATPase activity. The protein is Chaperone protein HtpG of Clostridium botulinum (strain Okra / Type B1).